The primary structure comprises 423 residues: Serpin B12 (423 aa).

The span at 63–72 shows a compositional bias: basic and acidic residues; that stretch reads LSKDEHKEPN. Positions 63-106 are disordered; the sequence is LSKDEHKEPNDPSPQSESKASDSSLEGQKQTSASQDQQGESTND. A compositionally biased stretch (polar residues) spans 75–106; it reads SPQSESKASDSSLEGQKQTSASQDQQGESTND.

It belongs to the serpin family. Ov-serpin subfamily. As to quaternary structure, interacts with SLFN12; as part of a pathway regulating cell differentiation.

It is found in the cytoplasm. In terms of biological role, inhibits trypsin and plasmin, but not thrombin, coagulation factor Xa, or urokinase-type plasminogen activator. May play a role in cell differentiation. This is Serpin B12 (Serpinb12) from Mus musculus (Mouse).